The primary structure comprises 250 residues: Small ribosomal subunit protein uS2 (250 aa).

It belongs to the universal ribosomal protein uS2 family.

This chain is Small ribosomal subunit protein uS2, found in Polaromonas naphthalenivorans (strain CJ2).